A 518-amino-acid polypeptide reads, in one-letter code: GMP synthase [glutamine-hydrolyzing] (518 aa).

The region spanning 8 to 201 (TVLIIDFGSQ…VCKISGIKNN (194 aa)) is the Glutamine amidotransferase type-1 domain. The active-site Nucleophile is C85. Residues H175 and E177 contribute to the active site. The region spanning 202–393 (WSMAAYRDQA…LGLPEEFIKR (192 aa)) is the GMPS ATP-PPase domain. Residue 229 to 235 (SGGVDSS) coordinates ATP.

In terms of assembly, homodimer.

It carries out the reaction XMP + L-glutamine + ATP + H2O = GMP + L-glutamate + AMP + diphosphate + 2 H(+). Its pathway is purine metabolism; GMP biosynthesis; GMP from XMP (L-Gln route): step 1/1. Functionally, catalyzes the synthesis of GMP from XMP. This chain is GMP synthase [glutamine-hydrolyzing], found in Bartonella bacilliformis (strain ATCC 35685 / KC583 / Herrer 020/F12,63).